The sequence spans 124 residues: Small ribosomal subunit protein uS12 (124 aa).

The tract at residues 1–30 (MPTIQQLVRKGRRDKVAKVKTAALKGSPQR) is disordered. Aspartate 89 carries the 3-methylthioaspartic acid modification. The interval 105-124 (QGVKNRKQARSRYGAKKEKS) is disordered. Basic residues predominate over residues 108–118 (KNRKQARSRYG).

Belongs to the universal ribosomal protein uS12 family. As to quaternary structure, part of the 30S ribosomal subunit. Contacts proteins S8 and S17. May interact with IF1 in the 30S initiation complex.

Functionally, with S4 and S5 plays an important role in translational accuracy. Interacts with and stabilizes bases of the 16S rRNA that are involved in tRNA selection in the A site and with the mRNA backbone. Located at the interface of the 30S and 50S subunits, it traverses the body of the 30S subunit contacting proteins on the other side and probably holding the rRNA structure together. The combined cluster of proteins S8, S12 and S17 appears to hold together the shoulder and platform of the 30S subunit. The protein is Small ribosomal subunit protein uS12 of Mycobacterium intracellulare.